The primary structure comprises 318 residues: UDP-3-O-acylglucosamine N-acyltransferase (318 aa).

Catalysis depends on His-231, which acts as the Proton acceptor.

This sequence belongs to the transferase hexapeptide repeat family. LpxD subfamily. As to quaternary structure, homotrimer.

The enzyme catalyses a UDP-3-O-[(3R)-3-hydroxyacyl]-alpha-D-glucosamine + a (3R)-hydroxyacyl-[ACP] = a UDP-2-N,3-O-bis[(3R)-3-hydroxyacyl]-alpha-D-glucosamine + holo-[ACP] + H(+). It participates in bacterial outer membrane biogenesis; LPS lipid A biosynthesis. Catalyzes the N-acylation of UDP-3-O-acylglucosamine using 3-hydroxyacyl-ACP as the acyl donor. Is involved in the biosynthesis of lipid A, a phosphorylated glycolipid that anchors the lipopolysaccharide to the outer membrane of the cell. This chain is UDP-3-O-acylglucosamine N-acyltransferase, found in Campylobacter jejuni subsp. doylei (strain ATCC BAA-1458 / RM4099 / 269.97).